A 316-amino-acid chain; its full sequence is Transaldolase (316 aa).

The active-site Schiff-base intermediate with substrate is the K132.

This sequence belongs to the transaldolase family. Type 1 subfamily. Homodimer.

The protein localises to the cytoplasm. It carries out the reaction D-sedoheptulose 7-phosphate + D-glyceraldehyde 3-phosphate = D-erythrose 4-phosphate + beta-D-fructose 6-phosphate. The protein operates within carbohydrate degradation; pentose phosphate pathway; D-glyceraldehyde 3-phosphate and beta-D-fructose 6-phosphate from D-ribose 5-phosphate and D-xylulose 5-phosphate (non-oxidative stage): step 2/3. In terms of biological role, transaldolase is important for the balance of metabolites in the pentose-phosphate pathway. This chain is Transaldolase, found in Methylobacillus flagellatus (strain ATCC 51484 / DSM 6875 / VKM B-1610 / KT).